The primary structure comprises 408 residues: AA9 family lytic polysaccharide monooxygenase A (408 aa).

An N-terminal signal peptide occupies residues 1–20; that stretch reads MKTTTYSLLALAAASKLASA. Residues His21 and His103 each contribute to the Cu(2+) site. Cys63 and Cys186 are joined by a disulfide. N-linked (GlcNAc...) asparagine glycosylation occurs at Asn151. His172 is an O2 binding site. Residue Tyr183 participates in Cu(2+) binding. N-linked (GlcNAc...) asparagine glycosylation is found at Asn331 and Asn381. Residues 369–405 form the CBM1 domain; the sequence is GVAKQYERCGGINHTGPTTCESGSVCKKWNPYYYQCV.

It belongs to the polysaccharide monooxygenase AA9 family. It depends on Cu(2+) as a cofactor.

The protein localises to the secreted. The catalysed reaction is [(1-&gt;4)-beta-D-glucosyl]n+m + reduced acceptor + O2 = 4-dehydro-beta-D-glucosyl-[(1-&gt;4)-beta-D-glucosyl]n-1 + [(1-&gt;4)-beta-D-glucosyl]m + acceptor + H2O.. Lytic polysaccharide monooxygenase (LPMO) that depolymerizes crystalline and amorphous polysaccharides via the oxidation of scissile alpha- or beta-(1-4)-glycosidic bonds, yielding C4 oxidation products. Catalysis by LPMOs requires the reduction of the active-site copper from Cu(II) to Cu(I) by a reducing agent and H(2)O(2) or O(2) as a cosubstrate. The protein is AA9 family lytic polysaccharide monooxygenase A (eglD) of Aspergillus kawachii (strain NBRC 4308) (White koji mold).